We begin with the raw amino-acid sequence, 217 residues long: NADH dehydrogenase (ubiquinone) 23 kDa subunit (217 aa).

The N-terminal 26 residues, Met1–Leu26, are a transit peptide targeting the mitochondrion. 4Fe-4S ferredoxin-type domains are found at residues Arg109–Glu138 and Thr148–Asn177. Positions 118, 121, 124, 128, 157, 160, 163, and 167 each coordinate [4Fe-4S] cluster.

It belongs to the complex I 23 kDa subunit family. In terms of assembly, part of the mitochondrial membrane respiratory chain NADH dehydrogenase (Complex I). This is a component of the iron-sulfur (IP) fragment of the enzyme. The cofactor is [4Fe-4S] cluster. As to expression, expressed in muscles (at protein level).

The protein resides in the mitochondrion. The catalysed reaction is a ubiquinone + NADH + 5 H(+)(in) = a ubiquinol + NAD(+) + 4 H(+)(out). In terms of biological role, core subunit of the mitochondrial membrane respiratory chain NADH dehydrogenase (Complex I) that is believed to belong to the minimal assembly required for catalysis. Complex I functions in the transfer of electrons from NADH to the respiratory chain. The immediate electron acceptor for the enzyme is believed to be ubiquinone. This chain is NADH dehydrogenase (ubiquinone) 23 kDa subunit, found in Drosophila melanogaster (Fruit fly).